Reading from the N-terminus, the 346-residue chain is NADH-ubiquinone oxidoreductase chain 2 (346 aa).

The next 10 helical transmembrane spans lie at 25–45 (HWVL…PLIS), 60–80 (FLTQ…NAWA), 95–115 (CLLL…HFWF), 124–144 (LMTA…LLLM), 149–169 (LNPA…GWMG), 178–195 (ILAF…IILV), 200–219 (LALL…FMAL), 247–267 (VLLS…WLII), 274–294 (EMTP…FFYL), and 326–346 (AILA…HAIV).

Belongs to the complex I subunit 2 family.

It is found in the mitochondrion inner membrane. The catalysed reaction is a ubiquinone + NADH + 5 H(+)(in) = a ubiquinol + NAD(+) + 4 H(+)(out). Core subunit of the mitochondrial membrane respiratory chain NADH dehydrogenase (Complex I) that is believed to belong to the minimal assembly required for catalysis. Complex I functions in the transfer of electrons from NADH to the respiratory chain. The immediate electron acceptor for the enzyme is believed to be ubiquinone. This chain is NADH-ubiquinone oxidoreductase chain 2 (MT-ND2), found in Anas capensis (Cape teal).